The primary structure comprises 169 residues: Peptide methionine sulfoxide reductase MsrA (169 aa).

Residue cysteine 10 is part of the active site.

This sequence belongs to the MsrA Met sulfoxide reductase family.

It carries out the reaction L-methionyl-[protein] + [thioredoxin]-disulfide + H2O = L-methionyl-(S)-S-oxide-[protein] + [thioredoxin]-dithiol. The enzyme catalyses [thioredoxin]-disulfide + L-methionine + H2O = L-methionine (S)-S-oxide + [thioredoxin]-dithiol. In terms of biological role, has an important function as a repair enzyme for proteins that have been inactivated by oxidation. Catalyzes the reversible oxidation-reduction of methionine sulfoxide in proteins to methionine. This chain is Peptide methionine sulfoxide reductase MsrA, found in Streptococcus pyogenes serotype M6 (strain ATCC BAA-946 / MGAS10394).